Reading from the N-terminus, the 489-residue chain is E3 ubiquitin-protein ligase RGLG1 (489 aa).

Basic and acidic residues predominate over residues 1–10 (MGGGNSKEES). The segment at 1 to 125 (MGGGNSKEES…SQSQVADRKK (125 aa)) is disordered. The N-myristoyl glycine moiety is linked to residue Gly-2. The segment covering 11–23 (SSPSSSSWASHQS) has biased composition (low complexity). The segment covering 34–57 (YPPPPTYAPAPSPAPAPAPVPAPS) has biased composition (pro residues). Positions 58 to 75 (PASSYGPQYSQEGYASQP) are enriched in low complexity. The segment covering 76 to 88 (NNPPPPTYAPAPS) has biased composition (pro residues). A VWFA domain is found at 156–376 (NLIVGIDFTK…KETEFALSAL (221 aa)). The RING-type zinc-finger motif lies at 446-479 (CPICLSNPKNMAFGCGHQTCCECGPDLKVCPICR).

Interacts with the heterodimer UBC35/UEV1B. Interacts with ERF053. Interacts with PP2CA. N-myristoylated. As to expression, ubiquitously expressed.

The protein resides in the cell membrane. Its subcellular location is the nucleus. It catalyses the reaction S-ubiquitinyl-[E2 ubiquitin-conjugating enzyme]-L-cysteine + [acceptor protein]-L-lysine = [E2 ubiquitin-conjugating enzyme]-L-cysteine + N(6)-ubiquitinyl-[acceptor protein]-L-lysine.. E3 ubiquitin-protein ligase that mediates the formation of 'Lys-63'-linked ubiquitin chains. Regulates apical dominance by acting on the auxin transport proteins abundance. Together with RGLG5, mediates the ubiquitination and subsequent proteasomal degradation of the target protein PP2CA. Functions as a positive regulator of abscisic acid (ABA) signaling through ABA-dependent degradation of PP2CA, a major inhibitor of ABA signaling. Acts as a negative regulator of drought stress response. The sequence is that of E3 ubiquitin-protein ligase RGLG1 from Arabidopsis thaliana (Mouse-ear cress).